The chain runs to 345 residues: Trace amine-associated receptor 6 (345 aa).

The Extracellular segment spans residues 1–32; the sequence is MSSNSSLLVAVQLCYPNVNGSCVETLYSPGSR. N-linked (GlcNAc...) asparagine glycans are attached at residues Asn4 and Asn19. 2 cysteine pairs are disulfide-bonded: Cys22–Cys186 and Cys105–Cys190. The chain crosses the membrane as a helical span at residues 33–53; it reads VILYIVFGFGAVLAVFGNLLV. Residues 54 to 68 are Cytoplasmic-facing; sequence MISILHFKQLHSPTN. The chain crosses the membrane as a helical span at residues 69–89; the sequence is FLVASLACADFLVGVTVMPFS. At 90 to 107 the chain is on the extracellular side; it reads MVRTVESCWYFGRSFCTF. The chain crosses the membrane as a helical span at residues 108–128; sequence HTCCDVAFCYSSLFHLCFISI. The Cytoplasmic portion of the chain corresponds to 129 to 147; sequence DRYIAVTDPLVYPTKFTVS. The helical transmembrane segment at 148-168 threads the bilayer; the sequence is VSGICISVSWILPLMYSGAVF. Residues 169 to 202 are Extracellular-facing; it reads YTGVYDDGLEELSDALNCIGGCQTVVNQNWVLID. A helical transmembrane segment spans residues 203–223; it reads CLSFFIPTFIMIILYGNIFLV. The Cytoplasmic portion of the chain corresponds to 224-259; it reads ARRQAKKIENTGSKTESSSESYKARVARRERKAAKT. The helical transmembrane segment at 260–276 threads the bilayer; the sequence is LGVTVVAFMISWLPYSI. The Extracellular portion of the chain corresponds to 277–282; that stretch reads DSLIDA. Residues 283-302 form a helical membrane-spanning segment; the sequence is FMGFITPAYIYEICCWCAYY. Residues 303–345 lie on the Cytoplasmic side of the membrane; it reads NSAMNPLIYALFYPWFRKAIKVIVTGQVLKNSSATMNLFSEHI.

The protein belongs to the G-protein coupled receptor 1 family.

The protein localises to the cell membrane. Its function is as follows. Olfactory receptor specific for trace amines, such as beta-phenylethylamine (beta-PEA). Trace amine compounds are enriched in animal body fluids and act on trace amine-associated receptors (TAARs) to elicit both intraspecific and interspecific innate behaviors. Beta-PEA-binding causes a conformation change that triggers signaling via G(s)-class of G alpha proteins (GNAL or GNAS). This chain is Trace amine-associated receptor 6 (TAAR6), found in Pan troglodytes (Chimpanzee).